A 709-amino-acid polypeptide reads, in one-letter code: MHAYSAAVLMGLLMVAEGAYVSTTACAHSAPNPTIQRYEPESIPTRLAPNRLLREPETTEASNEDRVVSIHAGIEKLSDLIKTGVSKVHGYLNLGPSATRDQPADEILRIYKLDDGIEKALVSPNLKAMESHVKELSTKNRKSEASVIGILTSHYGDDAVAKALVTAQKTVQSDDDVKTIWRLRNAQLSSWFSSDKSVDDVFTLLKLRHDDYLALASPKMEVLDDYMKLINRVTSGQETLLNVLTKGFGGEQTMAKLLLRGKEEPQTRELATALQNALLNKWVTDKFQPESVLKKLKLDRDLMNALSDPTRHTLTSYIAVFNTRNPGKKASFIGTLSAHYGDEMVANVLIAASRNGNTRRMANQLRTDQLSDWLNNQKSADEVFSLLKLRADLPNIDGALASGKLKLLEDYIKLFNREKAGDETLLKTLTTGFDGESNLAKALLTAEINPHSNKMVVKLQGELLNQWLLKGLKPESVLKNLGLDRGMKEVLSDPNRHFLTKYIWEYNSRNRFDRTSLILTLSAHYGDDVVARALAVAKGDSGLARTAAILQRQQLEGWLSSGKSADDVFTLLRIGADDFLPLNSQNLETLEDFVWLLNLKNRRIQTNIFTVVENKFGGDVQLARAVVKALNEADERGLRDSVGIASRYRSKLFGRWFDKSIEPKDVYAMILKVNGASADALEKSIVSRYTAFYKKRLAKAFTFDSPRRL.

The first 18 residues, 1 to 18, serve as a signal peptide directing secretion; sequence MHAYSAAVLMGLLMVAEG. Residues 51-66 carry the RxLR-dEER motif; the sequence is RLLREPETTEASNEDR.

It belongs to the RxLR effector family.

It localises to the secreted. The protein localises to the host cytoplasm. Its subcellular location is the host cytoskeleton. Its function is as follows. Effector that enhances P.infestans colonization of Nicotiana benthamiana leaves. The sequence is that of RxLR effector protein PITG_15110 from Phytophthora infestans (strain T30-4) (Potato late blight agent).